A 156-amino-acid polypeptide reads, in one-letter code: CASP-like protein 5C1 (156 aa).

The Cytoplasmic portion of the chain corresponds to 1 to 24; the sequence is MENRERAGAGAVGSAGSLGLRVEQ. A helical transmembrane segment spans residues 25 to 45; the sequence is AVFSSASLLFMSVGVEFFSYT. A topological domain (extracellular) is located at residue A46. The chain crosses the membrane as a helical span at residues 47 to 67; the sequence is FCFLVTIMGLVIPWSCTLAMI. Topologically, residues 68 to 81 are cytoplasmic; the sequence is DVYSILVGCPLRVP. Residues 82–102 traverse the membrane as a helical segment; the sequence is GVMVIVVIGDWVLAILSLAAA. At 103 to 132 the chain is on the extracellular side; sequence SSSAAVIDLLLQFHGSHCSPRFCGRYQLSA. The helical transmembrane segment at 133–153 threads the bilayer; the sequence is MMAFLSWFLTAASSLFNLWFI. Residues 154 to 156 lie on the Cytoplasmic side of the membrane; sequence ASR.

This sequence belongs to the Casparian strip membrane proteins (CASP) family. In terms of assembly, homodimer and heterodimers.

The protein resides in the cell membrane. The chain is CASP-like protein 5C1 from Oryza sativa subsp. indica (Rice).